The following is a 268-amino-acid chain: MGSTFIAYTLENIKASPAWTMPPYEQIICSCEAGTRSIAVGKLSRCDHIPSSNFIIQRGPVGTLIVVDSGTDICSYLLRADESGSEYHTTSLSSLPESLCVIPFTTCTVMGTDAYVYNNSGGVLTIMWMGSSIYMTITIYGRHDTFAKTVDNLHLVQNCSRQFYPTVVAEPRKDDPQQNSEAAQVLSKSVPGFIEYVGANPTDTLHEHTPPILDKFPHISGEDILIEALREADLRMEDSQCSPVNYPSPMPYGFTEDSCLLESVKIYP.

The protein belongs to the alphaherpesvirinae HHV-1 UL4 family.

It localises to the host nucleus. The sequence is that of Nuclear protein UL4 homolog (MDV016) from Gallid herpesvirus 2 (strain Chicken/Md5/ATCC VR-987) (GaHV-2).